Consider the following 174-residue polypeptide: Xanthine-guanine phosphoribosyltransferase (174 aa).

5-phospho-alpha-D-ribose 1-diphosphate contacts are provided by residues 49–50 and 108–116; these read RG and DDLVDTGAT. Residue Asp-109 participates in Mg(2+) binding. 2 residues coordinate guanine: Asp-112 and Ile-155. Xanthine-binding residues include Asp-112 and Ile-155. GMP contacts are provided by residues 112–116 and 154–155; these read DTGAT and WI.

The protein belongs to the purine/pyrimidine phosphoribosyltransferase family. XGPT subfamily. As to quaternary structure, homotetramer. Mg(2+) is required as a cofactor.

Its subcellular location is the cell inner membrane. It carries out the reaction GMP + diphosphate = guanine + 5-phospho-alpha-D-ribose 1-diphosphate. It catalyses the reaction XMP + diphosphate = xanthine + 5-phospho-alpha-D-ribose 1-diphosphate. The enzyme catalyses IMP + diphosphate = hypoxanthine + 5-phospho-alpha-D-ribose 1-diphosphate. It functions in the pathway purine metabolism; GMP biosynthesis via salvage pathway; GMP from guanine: step 1/1. It participates in purine metabolism; XMP biosynthesis via salvage pathway; XMP from xanthine: step 1/1. Purine salvage pathway enzyme that catalyzes the transfer of the ribosyl-5-phosphate group from 5-phospho-alpha-D-ribose 1-diphosphate (PRPP) to the N9 position of the 6-oxopurines guanine and xanthine to form the corresponding ribonucleotides GMP (guanosine 5'-monophosphate) and XMP (xanthosine 5'-monophosphate), with the release of PPi. To a lesser extent, also acts on hypoxanthine. This Rhodopseudomonas palustris (strain BisB18) protein is Xanthine-guanine phosphoribosyltransferase.